We begin with the raw amino-acid sequence, 75 residues long: ATP synthase subunit c (75 aa).

Helical transmembrane passes span 13 to 33 (LSVI…GILF) and 55 to 75 (FIGL…ALII).

It belongs to the ATPase C chain family. F-type ATPases have 2 components, F(1) - the catalytic core - and F(0) - the membrane proton channel. F(1) has five subunits: alpha(3), beta(3), gamma(1), delta(1), epsilon(1). F(0) has three main subunits: a(1), b(2) and c(10-14). The alpha and beta chains form an alternating ring which encloses part of the gamma chain. F(1) is attached to F(0) by a central stalk formed by the gamma and epsilon chains, while a peripheral stalk is formed by the delta and b chains.

It is found in the cell membrane. Functionally, f(1)F(0) ATP synthase produces ATP from ADP in the presence of a proton or sodium gradient. F-type ATPases consist of two structural domains, F(1) containing the extramembraneous catalytic core and F(0) containing the membrane proton channel, linked together by a central stalk and a peripheral stalk. During catalysis, ATP synthesis in the catalytic domain of F(1) is coupled via a rotary mechanism of the central stalk subunits to proton translocation. Its function is as follows. Key component of the F(0) channel; it plays a direct role in translocation across the membrane. A homomeric c-ring of between 10-14 subunits forms the central stalk rotor element with the F(1) delta and epsilon subunits. In Bifidobacterium longum (strain DJO10A), this protein is ATP synthase subunit c.